Reading from the N-terminus, the 677-residue chain is Nucleolar protein 9 (677 aa).

The segment covering 1–12 has biased composition (basic residues); the sequence is MAKPRGRKLLKK. Positions 1-50 are disordered; the sequence is MAKPRGRKLLKKQQKDQFEPSNDVEKFEDDRDHQENVYQGDAADSEKSSD. Residues 13–35 are compositionally biased toward basic and acidic residues; the sequence is QQKDQFEPSNDVEKFEDDRDHQE. Pumilio repeat units lie at residues 94-129, 130-165, 193-228, 287-331, 339-374, 375-412, 516-553, and 554-592; these read EAKGKELKLVTSQICSKLMERIILECDDMQLKSVFK, AFNGFFYNLSCHKYASHVLETLFVRSAALLEKELLT, ELKPHLKSMVSHQYASHSLRLLILILSSKMLPSSTK, DISP…LVFN, KEEAFVEYLLSDSVGSHFLENVIASARLKYVERLYH, LYMKDRIVKLAKRDTTGAFVVQAFLKHMKEKDVKQILD, NLPEERFLQMCYHGVFSHVVESVLQTKRVDTIKRRLLL, and NVLSKDIVNMSCNAYGSHIADKLWEFTAKLTVYKERIAQ. The disordered stretch occupies residues 639–677; that stretch reads PNAVKPQPKNQQFKNNGNDNKRSSDSNYSSSSNFKKQRR. The span at 646–655 shows a compositional bias: polar residues; that stretch reads PKNQQFKNNG.

It belongs to the NOP9 family.

Its subcellular location is the nucleus. The protein resides in the nucleolus. In terms of biological role, RNA-binding nucleolar protein required for pre-rRNA processing. Involved in production of 18S rRNA and assembly of small ribosomal subunit. This is Nucleolar protein 9 (NOP9) from Vanderwaltozyma polyspora (strain ATCC 22028 / DSM 70294 / BCRC 21397 / CBS 2163 / NBRC 10782 / NRRL Y-8283 / UCD 57-17) (Kluyveromyces polysporus).